The following is a 296-amino-acid chain: Tuberculosinyl adenosine transferase (296 aa).

The protein belongs to the diterpene synthase family. Homodimer. The cofactor is Mg(2+).

It carries out the reaction tuberculosinyl diphosphate + adenosine + H(+) = 1-tuberculosinyladenosine + diphosphate. The catalysed reaction is tuberculosinyl diphosphate + H2O = tuberculosinol + diphosphate. It catalyses the reaction tuberculosinyl diphosphate + H2O = (13R)-edaxadiene + diphosphate. The enzyme catalyses tuberculosinyl diphosphate + H2O = (13S)-edaxadiene + diphosphate. In terms of biological role, tuberculosinyl transferase that catalyzes the condensation of adenosine and tuberculosinyl diphosphate (TbPP) to generate 1-tuberculosinyladenosine (1-TbAd), which acts as an antiacid that directly protects M.tuberculosis from acid pH and physically remodels M.tuberculosis phagolysosomes. In addition, acts as a phosphatase that catalyzes the diphosphate-removal from TbPP to produce both tuberculosinol (TOH) and isotuberculosinol (iso-TOH). This is Tuberculosinyl adenosine transferase from Mycobacterium tuberculosis (strain CDC 1551 / Oshkosh).